The primary structure comprises 371 residues: Lysine racemase (371 aa).

Lys-39 (proton acceptor) is an active-site residue. An N6-(pyridoxal phosphate)lysine modification is found at Lys-39. Position 135 (Arg-135) interacts with substrate. Tyr-266 serves as the catalytic Proton acceptor. Met-313 serves as a coordination point for substrate.

It belongs to the alanine racemase family. Homodimer. It depends on pyridoxal 5'-phosphate as a cofactor.

The catalysed reaction is L-lysine = D-lysine. Catalyzes the interconversion of D-lysine and L-lysine. Can also use arginine and ornithine, but not alanine. This chain is Lysine racemase, found in Oenococcus oeni (strain ATCC BAA-331 / PSU-1).